Reading from the N-terminus, the 337-residue chain is 2-oxoglutarate-dependent dioxygenase 19 (337 aa).

The tract at residues 1-25 (MVAPSRLPSHEEQSAAAAADGSATP) is disordered. Positions 179–283 (NLESCFQILV…RMSFVSLIGP (105 aa)) constitute a Fe2OG dioxygenase domain. H208, D210, and H264 together coordinate Fe cation. R274 lines the 2-oxoglutarate pocket.

Belongs to the iron/ascorbate-dependent oxidoreductase family. Fe(2+) is required as a cofactor. The cofactor is L-ascorbate. In terms of tissue distribution, expressed in shoots.

The protein localises to the cytoplasm. It catalyses the reaction melatonin + 2-oxoglutarate + O2 = 2-hydroxymelatonin + succinate + CO2. Functionally, involved in melatonin degradation. Catalyzes the hydroxylation of melatonin to produce 2-hydroxymelatonin. This is 2-oxoglutarate-dependent dioxygenase 19 from Oryza sativa subsp. japonica (Rice).